Reading from the N-terminus, the 607-residue chain is Elongation factor 4 (607 aa).

Positions 11-193 constitute a tr-type G domain; sequence KSIRNFSIIA…QIVAKVPAPT (183 aa). GTP contacts are provided by residues 23 to 28 and 140 to 143; these read DHGKST and NKID.

This sequence belongs to the TRAFAC class translation factor GTPase superfamily. Classic translation factor GTPase family. LepA subfamily.

The protein localises to the cell membrane. The enzyme catalyses GTP + H2O = GDP + phosphate + H(+). Functionally, required for accurate and efficient protein synthesis under certain stress conditions. May act as a fidelity factor of the translation reaction, by catalyzing a one-codon backward translocation of tRNAs on improperly translocated ribosomes. Back-translocation proceeds from a post-translocation (POST) complex to a pre-translocation (PRE) complex, thus giving elongation factor G a second chance to translocate the tRNAs correctly. Binds to ribosomes in a GTP-dependent manner. The protein is Elongation factor 4 of Exiguobacterium sibiricum (strain DSM 17290 / CCUG 55495 / CIP 109462 / JCM 13490 / 255-15).